Reading from the N-terminus, the 833-residue chain is Protein translocase subunit SecA (833 aa).

ATP is bound by residues Gln87, 105 to 109 (GEGKT), and Asp494. A disordered region spans residues 789–816 (PAAVAYSGGEAEAGPAQPHREDPKVGRN). Residues 806-815 (PHREDPKVGR) are compositionally biased toward basic and acidic residues. Zn(2+) contacts are provided by Cys819, Cys821, Cys830, and Cys831.

It belongs to the SecA family. Monomer and homodimer. Part of the essential Sec protein translocation apparatus which comprises SecA, SecYEG and auxiliary proteins SecDF-YajC and YidC. It depends on Zn(2+) as a cofactor.

Its subcellular location is the cell inner membrane. The protein localises to the cytoplasm. The catalysed reaction is ATP + H2O + cellular proteinSide 1 = ADP + phosphate + cellular proteinSide 2.. In terms of biological role, part of the Sec protein translocase complex. Interacts with the SecYEG preprotein conducting channel. Has a central role in coupling the hydrolysis of ATP to the transfer of proteins into and across the cell membrane, serving as an ATP-driven molecular motor driving the stepwise translocation of polypeptide chains across the membrane. The polypeptide is Protein translocase subunit SecA (Nitratidesulfovibrio vulgaris (strain DP4) (Desulfovibrio vulgaris)).